Consider the following 2555-residue polypeptide: Ubiquitin carboxyl-terminal hydrolase 9Y (2555 aa).

The disordered stretch occupies residues 1–66 (MTAITHGSPV…APPQHEDEEP (66 aa)). Positions 13–45 (NDSQGQVLDGQSQHLFQQNQTSSPDSSNENSVA) are enriched in polar residues. The residue at position 589 (serine 589) is a Phosphoserine. Threonine 591 carries the phosphothreonine modification. The interval 972–997 (NMPSSPDSSSDSSTASPGNHRNHYND) is disordered. Residues 974–984 (PSSPDSSSDSS) are compositionally biased toward low complexity. Residues 1559 to 1958 (VGLKNAGATC…NAYILFYEQM (400 aa)) enclose the USP domain. Cysteine 1568 acts as the Nucleophile in catalysis. Residues cysteine 1729, histidine 1731, cysteine 1773, and cysteine 1776 each coordinate Zn(2+). The active-site Proton acceptor is histidine 1881. Phosphoserine is present on serine 2444. Residues 2476-2485 (PEEEPDDQDA) are compositionally biased toward acidic residues. The interval 2476-2555 (PEEEPDDQDA…EVSSPQMKDQ (80 aa)) is disordered. Composition is skewed to polar residues over residues 2504–2514 (PASQYQQNNHV) and 2528–2555 (NNPQ…MKDQ). Tyrosine 2541 is modified (phosphotyrosine). Serine 2548 bears the Phosphoserine mark.

Belongs to the peptidase C19 family. Widely expressed in embryonic and adult tissues.

It catalyses the reaction Thiol-dependent hydrolysis of ester, thioester, amide, peptide and isopeptide bonds formed by the C-terminal Gly of ubiquitin (a 76-residue protein attached to proteins as an intracellular targeting signal).. Its pathway is protein modification; protein ubiquitination. In terms of biological role, deubiquitinase that mediates deubiquitination of target proteins. May stabilize target proteins that are important for male germ cell development. The protein is Ubiquitin carboxyl-terminal hydrolase 9Y of Homo sapiens (Human).